A 142-amino-acid polypeptide reads, in one-letter code: DNA polymerase III subunit chi (142 aa).

Belongs to the DNA polymerase III chi/HolC chain family. As to quaternary structure, DNA polymerase III contains a core (composed of alpha, epsilon and theta chains) that associates with a tau subunit. This core dimerizes to form the POLIII' complex. PolIII' associates with the gamma complex (composed of gamma, delta, delta', psi and chi chains) and with the beta chain to form the complete DNA polymerase III complex. Interacts directly with the psi subunit (holD). The only subunit of the DNA polymerase III holoenzyme known to interact with single-stranded DNA binding protein (SSB).

The catalysed reaction is DNA(n) + a 2'-deoxyribonucleoside 5'-triphosphate = DNA(n+1) + diphosphate. Its function is as follows. Part of the beta sliding clamp loading complex, which hydrolyzes ATP to load the beta clamp onto primed DNA to form the DNA replication pre-initiation complex. DNA polymerase III is a complex, multichain enzyme responsible for most of the replicative synthesis in bacteria. This DNA polymerase also exhibits 3' to 5' exonuclease activity. The protein is DNA polymerase III subunit chi of Pseudomonas aeruginosa (strain ATCC 15692 / DSM 22644 / CIP 104116 / JCM 14847 / LMG 12228 / 1C / PRS 101 / PAO1).